The chain runs to 431 residues: uncharacterized protein (431 aa).

The next 2 helical transmembrane spans lie at 42–62 (LLIG…IGCL) and 74–94 (VMIF…ATML). N-linked (GlcNAc...) asparagine; by host glycosylation is present at Asn105. A run of 5 helical transmembrane segments spans residues 111–131 (LVLF…LFLI), 153–173 (AGVA…AAVP), 202–222 (MWFL…ELAY), 236–256 (VCTF…FRVL), and 279–299 (ATRT…IAFF).

The protein localises to the membrane. This is an uncharacterized protein from Homo sapiens (Human).